The chain runs to 283 residues: Pantothenate synthetase (283 aa).

34–41 (MGALHDGH) serves as a coordination point for ATP. H41 (proton donor) is an active-site residue. Residue Q65 coordinates (R)-pantoate. Q65 provides a ligand contact to beta-alanine. ATP is bound at residue 152–155 (GQKD). A (R)-pantoate-binding site is contributed by Q158. ATP contacts are provided by residues V181 and 189-192 (MSSR).

It belongs to the pantothenate synthetase family. In terms of assembly, homodimer.

It localises to the cytoplasm. The catalysed reaction is (R)-pantoate + beta-alanine + ATP = (R)-pantothenate + AMP + diphosphate + H(+). It functions in the pathway cofactor biosynthesis; (R)-pantothenate biosynthesis; (R)-pantothenate from (R)-pantoate and beta-alanine: step 1/1. In terms of biological role, catalyzes the condensation of pantoate with beta-alanine in an ATP-dependent reaction via a pantoyl-adenylate intermediate. The sequence is that of Pantothenate synthetase from Nitrobacter hamburgensis (strain DSM 10229 / NCIMB 13809 / X14).